The sequence spans 380 residues: MSKAGSDASSISCSLSLDSDSCDDEFYETNLNKLIENTSLNWIFVGGKGGVGKTTTSCSIAIQLAKKRESVLLLSTDPAHNTSDAFNQKFTNKPTLINSFDNLYCMEIDTTFSEDTAFKINKSDFLNSIIPELLQSFPGIDEALCFAELMQSIRNMKYSVIVFDTAPTGHTLRLLAFPDLLKKALGYLINLKEKLKGTLNMLQSLTSNEMEFEGMYDKINHLNTMSISIQENFQNPLKTTFVCVCIPEFLSVYETERLIQELTKKNISCYNIVVNQVVFPLTSQDANIESCEGLLKQIKDTNIKDSFSSLILKAKELEDVYISRRKLQSKYLTQIKNLYGNYFHIVCMPQLKSEIRGLDKIASFSEMLLQSKDIPIYSPQ.

Position 48 to 55 (48 to 55 (KGGVGKTT)) interacts with ATP. Asp77 is an active-site residue. Glu248 and Asn275 together coordinate ATP.

It belongs to the arsA ATPase family. In terms of assembly, homodimer.

It is found in the cytoplasm. The protein resides in the endoplasmic reticulum. Functionally, ATPase required for the post-translational delivery of tail-anchored (TA) proteins to the endoplasmic reticulum. Recognizes and selectively binds the transmembrane domain of TA proteins in the cytosol. This complex then targets to the endoplasmic reticulum by membrane-bound receptors, where the tail-anchored protein is released for insertion. This process is regulated by ATP binding and hydrolysis. ATP binding drives the homodimer towards the closed dimer state, facilitating recognition of newly synthesized TA membrane proteins. ATP hydrolysis is required for insertion. Subsequently, the homodimer reverts towards the open dimer state, lowering its affinity for the membrane-bound receptor, and returning it to the cytosol to initiate a new round of targeting. The sequence is that of ATPase ASNA1 homolog from Plasmodium chabaudi chabaudi.